We begin with the raw amino-acid sequence, 515 residues long: 2-isopropylmalate synthase (515 aa).

One can recognise a Pyruvate carboxyltransferase domain in the interval 5–267 (VIIFDTTLRD…DTHINTQEIH (263 aa)). The Mn(2+) site is built by Asp14, His202, His204, and Asn238. Residues 392-515 (VLDKLSAHST…VADIKNHKHH (124 aa)) are regulatory domain.

Belongs to the alpha-IPM synthase/homocitrate synthase family. LeuA type 1 subfamily. In terms of assembly, homodimer. Mn(2+) serves as cofactor.

It is found in the cytoplasm. It carries out the reaction 3-methyl-2-oxobutanoate + acetyl-CoA + H2O = (2S)-2-isopropylmalate + CoA + H(+). It participates in amino-acid biosynthesis; L-leucine biosynthesis; L-leucine from 3-methyl-2-oxobutanoate: step 1/4. In terms of biological role, catalyzes the condensation of the acetyl group of acetyl-CoA with 3-methyl-2-oxobutanoate (2-ketoisovalerate) to form 3-carboxy-3-hydroxy-4-methylpentanoate (2-isopropylmalate). In Haemophilus influenzae (strain ATCC 51907 / DSM 11121 / KW20 / Rd), this protein is 2-isopropylmalate synthase.